A 499-amino-acid polypeptide reads, in one-letter code: Cryptochrome-1 (499 aa).

Residues Arg-190, Ser-218, Ser-220, Gln-261, His-328, 360–362 (DAD), Cys-366, and Asn-369 contribute to the FAD site.

It belongs to the DNA photolyase class-1 family. In terms of assembly, interacts with tim and per; promoted by light conditions. Requires FAD as cofactor.

It localises to the cytoplasm. The protein resides in the perinuclear region. The protein localises to the nucleus. In terms of biological role, blue light-dependent regulator that is the input of the circadian feedback loop. Has no photolyase activity for cyclobutane pyrimidine dimers or 6-4 photoproducts. Regulation of expression by light suggests a role in photoreception for locomotor activity rhythms. Functions, together with per, as a transcriptional repressor required for the oscillation of peripheral circadian clocks and for the correct specification of clock cells. Genes directly activated by the transcription factors Clock (Clk) and cycle (cyc) are repressed by cry. This Culex quinquefasciatus (Southern house mosquito) protein is Cryptochrome-1.